Reading from the N-terminus, the 259-residue chain is UPF0246 protein Pmen_1032 (259 aa).

The protein belongs to the UPF0246 family.

This Ectopseudomonas mendocina (strain ymp) (Pseudomonas mendocina) protein is UPF0246 protein Pmen_1032.